Reading from the N-terminus, the 9702-residue chain is Nonribosomal peptide synthetase ungA (9702 aa).

The adenylation 1 stretch occupies residues 248-647 (EQAQLRPHAP…ARKDTQVKIR (400 aa)). Residues 775-852 (APQTEMEYRL…MARAAQEKQT (78 aa)) enclose the Carrier 1 domain. Position 812 is an O-(pantetheine 4'-phosphoryl)serine (Ser812). The condensation 1 stretch occupies residues 891 to 1288 (DILPCTPLQE…EAVLRHVCSQ (398 aa)). An adenylation 2 region spans residues 1330–1730 (QRTQQQPDAP…GRKDTQVKIR (401 aa)). The region spanning 1857-1933 (LPQSPMEKSL…RLARREIQTD (77 aa)) is the Carrier 2 domain. Ser1894 is subject to O-(pantetheine 4'-phosphoryl)serine. The tract at residues 1946–2374 (PFALSPIQQF…ERALEGTAVQ (429 aa)) is epimerization 1. Residues 2414–2842 (EDIYPCSPLQ…LDTAILSPQD (429 aa)) are condensation 2. The adenylation 3 stretch occupies residues 2868–3267 (QVERQPDALA…GRKDTQVKIR (400 aa)). The Carrier 3 domain occupies 3397-3473 (APTTEMERHL…EMSQVAKLGS (77 aa)). An O-(pantetheine 4'-phosphoryl)serine modification is found at Ser3434. The segment at 3512-3920 (EDVFPCTPLQ…LLCDASHHQS (409 aa)) is condensation 3. An adenylation 4 region spans residues 3957–4361 (KQTQRRSAAQ…GRKDAQVKIR (405 aa)). Positions 4491–4568 (PPTTDLERQI…LALSVSAAVD (78 aa)) constitute a Carrier 4 domain. An O-(pantetheine 4'-phosphoryl)serine modification is found at Ser4528. The tract at residues 4583–5013 (ALSPIQQMFA…QAAAQALPLL (431 aa)) is epimerization 2. Positions 5049-5474 (VEDIYPCSPL…ANIISHQDLE (426 aa)) are condensation 4. The tract at residues 5496-5899 (MQQAESQPGA…GRKDNQVKIH (404 aa)) is adenylation 5. Residues 6033–6110 (TASSPEELEL…LVSHAQGNTA (78 aa)) enclose the Carrier 5 domain. An O-(pantetheine 4'-phosphoryl)serine modification is found at Ser6070. The tract at residues 6127–6551 (ELSPIQQLFF…CKSSLEAAAA (425 aa)) is epimerization 3. A condensation 5 region spans residues 6593-6935 (VEDIYPCAPI…TGISVQGGAA (343 aa)). An adenylation 6 region spans residues 7047–7447 (KRPDAPAIDA…GRRDNQVKVR (401 aa)). One can recognise a Carrier 6 domain in the interval 7575–7655 (GPQTEVERLL…RSARTVQGHV (81 aa)). O-(pantetheine 4'-phosphoryl)serine is present on Ser7613. Positions 7670–8106 (DLAPVQQMFA…LVTASELLMQ (437 aa)) are epimerization 4. The interval 8144–8588 (VEDIYPCSPI…EVDLSTDHDQ (445 aa)) is condensation 6. Residues 8612–9025 (NTVQKQPHST…GRKDSQVKIR (414 aa)) are adenylation 7. The Carrier 7 domain occupies 9158–9236 (SPTAPMERRL…LALLVREGDA (79 aa)). Ser9196 carries the O-(pantetheine 4'-phosphoryl)serine modification. The tract at residues 9282–9629 (DVYPTTDLQN…DNLEHDPGTA (348 aa)) is condensation 7.

Belongs to the NRP synthetase family.

It functions in the pathway secondary metabolite biosynthesis. Its function is as follows. Nonribosomal peptide synthetase; part of the gene cluster that mediates the biosynthesis of the unguisins, gamma-aminobutyric acid (GABA)-containing fungal cyclic heptapeptides with the amino acid sequence cyclo-(D-Ala1-D-Val2-L-Phe3-D-Val4-D-Ala5-D-Trp6-GABA7) for unguisin A and cyclo-(D-Ala1-D-Val2-L-Leu3-D-Val4-D-Ala5-D-Trp6-GABA7) for unguisin B. UngA is the main enzyme within the cluster which condenses the 7 residues using its respective 7 modules. The terminal condensation domain (Ct) is involved in cyclization with D-alanine and thereby releasing of unguisins A and B. The alanine racemase ungC provides D-alanine, which is then accepted by the first adenylation domain of ungA. Finally, the hydrolase ungD catalyzes the hydrolysis between the D-tryptophan and GABA residues of unguisins A and B to produce the corresponding linear peptides. The polypeptide is Nonribosomal peptide synthetase ungA (Aspergillus violaceofuscus (strain CBS 115571)).